The following is a 261-amino-acid chain: Indole-3-glycerol phosphate synthase (261 aa).

It belongs to the TrpC family.

The catalysed reaction is 1-(2-carboxyphenylamino)-1-deoxy-D-ribulose 5-phosphate + H(+) = (1S,2R)-1-C-(indol-3-yl)glycerol 3-phosphate + CO2 + H2O. The protein operates within amino-acid biosynthesis; L-tryptophan biosynthesis; L-tryptophan from chorismate: step 4/5. In Paraburkholderia phymatum (strain DSM 17167 / CIP 108236 / LMG 21445 / STM815) (Burkholderia phymatum), this protein is Indole-3-glycerol phosphate synthase.